The following is a 95-amino-acid chain: MSSRNQRSRITSSFFVSFFTRTILLLLILLLGFCNGARTNTNVFNSKPHKKHNDAVSSSTKQFLGFLPRHFPVPASGPSRKHNDIGLLSWHRSSP.

The N-terminal stretch at 1 to 35 (MSSRNQRSRITSSFFVSFFTRTILLLLILLLGFCN) is a signal peptide. A disordered region spans residues 75–95 (ASGPSRKHNDIGLLSWHRSSP).

As to expression, expressed in leaves, buds, flowers, seedlings and seeds. Detected at the base of pedicel, in the floral and funicule abscission zones and in vascular tissues.

The protein localises to the secreted. Its subcellular location is the extracellular space. Functionally, may be involved in floral abscission. The sequence is that of Protein IDA-LIKE 2 (IDL2) from Arabidopsis thaliana (Mouse-ear cress).